The chain runs to 218 residues: Probable nicotinate-nucleotide adenylyltransferase (218 aa).

It belongs to the NadD family.

It catalyses the reaction nicotinate beta-D-ribonucleotide + ATP + H(+) = deamido-NAD(+) + diphosphate. It participates in cofactor biosynthesis; NAD(+) biosynthesis; deamido-NAD(+) from nicotinate D-ribonucleotide: step 1/1. Its function is as follows. Catalyzes the reversible adenylation of nicotinate mononucleotide (NaMN) to nicotinic acid adenine dinucleotide (NaAD). The sequence is that of Probable nicotinate-nucleotide adenylyltransferase from Burkholderia cenocepacia (strain ATCC BAA-245 / DSM 16553 / LMG 16656 / NCTC 13227 / J2315 / CF5610) (Burkholderia cepacia (strain J2315)).